The sequence spans 49 residues: Sperm protamine P1 (49 aa).

This sequence belongs to the protamine P1 family. As to expression, testis.

The protein resides in the nucleus. The protein localises to the chromosome. Functionally, protamines substitute for histones in the chromatin of sperm during the haploid phase of spermatogenesis. They compact sperm DNA into a highly condensed, stable and inactive complex. The sequence is that of Sperm protamine P1 (PRM1) from Rhinopoma hardwickii (Lesser mouse-tailed bat).